Consider the following 589-residue polypeptide: 2-succinyl-5-enolpyruvyl-6-hydroxy-3-cyclohexene-1-carboxylate synthase (589 aa).

It belongs to the TPP enzyme family. MenD subfamily. In terms of assembly, homodimer. It depends on Mg(2+) as a cofactor. Mn(2+) is required as a cofactor. Requires thiamine diphosphate as cofactor.

It carries out the reaction isochorismate + 2-oxoglutarate + H(+) = 5-enolpyruvoyl-6-hydroxy-2-succinyl-cyclohex-3-ene-1-carboxylate + CO2. It functions in the pathway quinol/quinone metabolism; 1,4-dihydroxy-2-naphthoate biosynthesis; 1,4-dihydroxy-2-naphthoate from chorismate: step 2/7. The protein operates within quinol/quinone metabolism; menaquinone biosynthesis. Functionally, catalyzes the thiamine diphosphate-dependent decarboxylation of 2-oxoglutarate and the subsequent addition of the resulting succinic semialdehyde-thiamine pyrophosphate anion to isochorismate to yield 2-succinyl-5-enolpyruvyl-6-hydroxy-3-cyclohexene-1-carboxylate (SEPHCHC). The polypeptide is 2-succinyl-5-enolpyruvyl-6-hydroxy-3-cyclohexene-1-carboxylate synthase (Myxococcus xanthus (strain DK1622)).